A 69-amino-acid chain; its full sequence is Light-harvesting protein B-870 beta chain (69 aa).

Residues 1–2 (MA) constitute a propeptide that is removed on maturation. At 3 to 22 (EVKQESLSGITEGEAKEFHK) the chain is on the cytoplasmic side. Positions 21 and 39 each coordinate a bacteriochlorophyll. The chain crosses the membrane as a helical span at residues 23–45 (IFTSSILVFFGVAAFAHLLVWIW). The Periplasmic segment spans residues 46-56 (RPWVPGPNGYS). Residues 57–69 (ALETLTQTLTYLS) constitute a propeptide that is removed on maturation.

The protein belongs to the antenna complex beta subunit family. In terms of assembly, the core complex is formed by different alpha and beta chains, binding bacteriochlorophyll molecules, and arranged most probably in tetrameric structures disposed around the reaction center. The non-pigmented gamma chains may constitute additional components.

Its subcellular location is the cell inner membrane. In terms of biological role, antenna complexes are light-harvesting systems, which transfer the excitation energy to the reaction centers. The sequence is that of Light-harvesting protein B-870 beta chain from Rhodospirillum rubrum (strain ATCC 11170 / ATH 1.1.1 / DSM 467 / LMG 4362 / NCIMB 8255 / S1).